The primary structure comprises 438 residues: Xylose isomerase (438 aa).

Residues H100 and D103 contribute to the active site. Residues E231, E267, H270, D295, D306, D308, and D338 each contribute to the Mg(2+) site.

It belongs to the xylose isomerase family. As to quaternary structure, homotetramer. Requires Mg(2+) as cofactor.

The protein resides in the cytoplasm. The enzyme catalyses alpha-D-xylose = alpha-D-xylulofuranose. This chain is Xylose isomerase, found in Pseudomonas fluorescens (strain Pf0-1).